The chain runs to 275 residues: Lectin 8 (275 aa).

The first 31 residues, 1-31 (MANSNPKLLVTQNPFSVFLLTFLLLITNVKS), serve as a signal peptide directing secretion. Residues N55 and N150 are each glycosylated (N-linked (GlcNAc...) asparagine).

Belongs to the leguminous lectin family.

May be involved in arbuscular mycorrhizal (AM) symbiosis with AM fungi. The sequence is that of Lectin 8 from Medicago truncatula (Barrel medic).